The following is a 754-amino-acid chain: 5-methyltetrahydropteroyltriglutamate--homocysteine methyltransferase (754 aa).

5-methyltetrahydropteroyltri-L-glutamate contacts are provided by residues 17–20 and lysine 117; that span reads RELK. L-homocysteine contacts are provided by residues 431–433 and glutamate 484; that span reads IGS. L-methionine is bound by residues 431–433 and glutamate 484; that span reads IGS. 5-methyltetrahydropteroyltri-L-glutamate contacts are provided by residues 515–516 and tryptophan 561; that span reads RC. An L-homocysteine-binding site is contributed by aspartate 599. Residue aspartate 599 coordinates L-methionine. Residue glutamate 605 coordinates 5-methyltetrahydropteroyltri-L-glutamate. Residues histidine 641, cysteine 643, and glutamate 665 each contribute to the Zn(2+) site. Residue histidine 694 is the Proton donor of the active site. Residue cysteine 726 coordinates Zn(2+).

It belongs to the vitamin-B12 independent methionine synthase family. Zn(2+) serves as cofactor.

The enzyme catalyses 5-methyltetrahydropteroyltri-L-glutamate + L-homocysteine = tetrahydropteroyltri-L-glutamate + L-methionine. It functions in the pathway amino-acid biosynthesis; L-methionine biosynthesis via de novo pathway; L-methionine from L-homocysteine (MetE route): step 1/1. Its function is as follows. Catalyzes the transfer of a methyl group from 5-methyltetrahydrofolate to homocysteine resulting in methionine formation. In Salmonella typhi, this protein is 5-methyltetrahydropteroyltriglutamate--homocysteine methyltransferase.